Reading from the N-terminus, the 330-residue chain is Polygalacturonase inhibitor 2 (330 aa).

A signal peptide spans 1–21 (MDKTMTLFLLLSTLLLTTSLA). 2 cysteine pairs are disulfide-bonded: C25-C55 and C56-C63. 10 LRR repeats span residues 69 to 93 (NHRVTSLIIQDGEISGQIPPEVGDL), 94 to 117 (PYLTSLIFRKLTNLTGHIQPTIAK), 118 to 141 (LKNLTFLRLSWTNLTGPVPEFLSQ), 142 to 166 (LKNLEYIDLSFNDLSGSIPSSLSSL), 167 to 192 (RKLEYLELSRNKLTGPIPESFGTFSG), 194 to 215 (VPSLFLSHNQLSGTIPKSLGNP), 217 to 237 (FYRIDLSRNKLQGDASILFGA), 238 to 260 (KKTTWIVDISRNMFQFDLSKVKL), 261 to 285 (AKTLNNLDMNHNGITGSIPAEWSKA), and 287 to 308 (FQLLNVSYNRLCGRIPKGEYIQ). N106, N120, and N130 each carry an N-linked (GlcNAc...) asparagine glycan. N291 carries an N-linked (GlcNAc...) asparagine glycan. Disulfide bonds link C298–C320 and C322–C329.

The protein belongs to the polygalacturonase-inhibiting protein family.

The protein localises to the secreted. Its subcellular location is the cell wall. The protein resides in the membrane. Inhibitor of fungal polygalacturonase. It is an important factor for plant resistance to phytopathogenic fungi. In Arabidopsis thaliana (Mouse-ear cress), this protein is Polygalacturonase inhibitor 2 (PGIP2).